Reading from the N-terminus, the 513-residue chain is Probable G-protein coupled receptor 176 (513 aa).

The disordered stretch occupies residues 1-25; sequence MGHNGSWVSPNTSHPRNTSGAQAGA. The Extracellular segment spans residues 1-41; it reads MGHNGSWVSPNTSHPRNTSGAQAGANSSAFGELSEAQLYRQ. Asn4, Asn11, Asn17, and Asn26 each carry an N-linked (GlcNAc...) asparagine glycan. The chain crosses the membrane as a helical span at residues 42-64; it reads FTTTVQVVIFIGSLLGNFTVLWS. The Cytoplasmic segment spans residues 65–77; it reads TCRTTVFKSVTNR. A helical membrane pass occupies residues 78–98; that stretch reads FIKNLACSGICASVVCVPFDI. Residues 99 to 108 lie on the Extracellular side of the membrane; that stretch reads ILSTSPHCCW. The helical transmembrane segment at 109 to 129 threads the bilayer; sequence WIYTMLFCKVLKFLHKVFCSV. Residues 130-157 lie on the Cytoplasmic side of the membrane; it reads TVLSFPAIALDRYYSVLYPLERKISDAK. The helical transmembrane segment at 158–177 threads the bilayer; it reads SRELVMYIWAHAVVASVPVF. Topologically, residues 178 to 204 are extracellular; it reads AVTNVADIYATSTCTEVWSNSLGHLVY. The chain crosses the membrane as a helical span at residues 205-225; it reads VLIYNVTTVIVPVAVVFLFLI. The Cytoplasmic portion of the chain corresponds to 226 to 264; sequence LIRRALSASQKKKVIIAALRTPQNTISIPYASQREAELH. The helical transmembrane segment at 265–285 threads the bilayer; that stretch reads ATLLSMVTVFILCSVPYATLV. At 286 to 301 the chain is on the extracellular side; sequence VYQTVLNVPNTSVFLL. Residues 302 to 322 traverse the membrane as a helical segment; the sequence is LTAIWLPKVSLLANPVLFLTV. Residues 323 to 513 lie on the Cytoplasmic side of the membrane; that stretch reads NRSVRKCLVG…KVSIFPKVDS (191 aa). Positions 404-432 are disordered; the sequence is VLTSSPEGEESQLAPSVPPPGTVDSVSRV.

It belongs to the G-protein coupled receptor 1 family. As to expression, expressed in brain, lung, heart, stomach, intestine, cultured aortic smooth muscle cells and cardiac myocytes.

Its subcellular location is the cell membrane. In terms of biological role, orphan receptor involved in normal circadian rhythm behavior. Acts through the G-protein subclass G(z)-alpha and has an agonist-independent basal activity to repress cAMP production. This is Probable G-protein coupled receptor 176 (Gpr176) from Rattus norvegicus (Rat).